We begin with the raw amino-acid sequence, 736 residues long: Putative ATP-dependent RNA helicase CG14443 (736 aa).

Disordered stretches follow at residues 32–58 (TKSSIWGSSASDISGQSRSLKSSSSVL), 73–166 (GIEG…GERP), 183–237 (NSFK…NSWR), and 265–296 (SFTRSRSPHRNTLCYQDQSKNPSRPSNYNTWK). Low complexity-rich tracts occupy residues 34–58 (SSIWGSSASDISGQSRSLKSSSSVL) and 125–160 (SSESAHSSGSESSSSDSNSGSSSDSDSTTGSSSHGS). The segment covering 190–199 (TSRENKESRS) has biased composition (basic and acidic residues). Polar residues predominate over residues 277 to 296 (LCYQDQSKNPSRPSNYNTWK). A Q motif motif is present at residues 330 to 358 (LSFERSGFNATILQQLEDQGYDGPTPIQA). Residues 361–534 (WSIAKEGKNI…NKFLGQYTAI (174 aa)) enclose the Helicase ATP-binding domain. 374–381 (SGKGTGKT) contributes to the ATP binding site. A DEAD box motif is present at residues 482-485 (DNID). In terms of domain architecture, Helicase C-terminal spans 561–719 (KVERLMKELT…LLQLAEEKMF (159 aa)).

It belongs to the DEAD box helicase family.

The catalysed reaction is ATP + H2O = ADP + phosphate + H(+). Its function is as follows. Probable ATP-binding RNA helicase. In Drosophila melanogaster (Fruit fly), this protein is Putative ATP-dependent RNA helicase CG14443.